Consider the following 114-residue polypeptide: uncharacterized protein (114 aa).

An HIT domain is found at 6–114 (IFKNIIQRKI…LGGKKLKSFS (109 aa)).

This is an uncharacterized protein from Buchnera aphidicola subsp. Acyrthosiphon pisum (strain APS) (Acyrthosiphon pisum symbiotic bacterium).